A 378-amino-acid polypeptide reads, in one-letter code: Chorismate synthase (378 aa).

The segment at 37–60 is disordered; that stretch reads EEEIQKDLTRRRPGQNDLTTPRDE. Arg47 lines the NADP(+) pocket. FMN is bound by residues 124 to 126, Gly289, 304 to 308, and Arg330; these read RSS and KPTST.

This sequence belongs to the chorismate synthase family. Homotetramer. The cofactor is FMNH2.

It carries out the reaction 5-O-(1-carboxyvinyl)-3-phosphoshikimate = chorismate + phosphate. The protein operates within metabolic intermediate biosynthesis; chorismate biosynthesis; chorismate from D-erythrose 4-phosphate and phosphoenolpyruvate: step 7/7. In terms of biological role, catalyzes the anti-1,4-elimination of the C-3 phosphate and the C-6 proR hydrogen from 5-enolpyruvylshikimate-3-phosphate (EPSP) to yield chorismate, which is the branch point compound that serves as the starting substrate for the three terminal pathways of aromatic amino acid biosynthesis. This reaction introduces a second double bond into the aromatic ring system. The chain is Chorismate synthase from Leptospira biflexa serovar Patoc (strain Patoc 1 / Ames).